The following is a 333-amino-acid chain: MKKSTKLLAGIVTLASAMTLAACQSTNDNTSVITMKGDTISVSDFYNETKNTEISQRAMLNLVVSRVFEDQYGKKVSKKRTEEAYNKSAEQYGASFSAALAQSGLTTDTYKRQIRSAMLVEYAVKEAAKKELTDADYKKAYESYTPEMTTQVTTLDNEETAKAVLGEVKAEGADFAAIAKEKTTAADKKVDYKFDSGDTKLPADVIKAASGLKEGDISEVVSVLDPATYQNKFYIVKVTKKAEKASDWKKYKKRLKEIVLAEKTQNIDFQNKVIAKALDKANVKIKDQAFANILAQYANTDKKASKANTSKSDQKSSSDSSKDSQSSKSKSEK.

The N-terminal stretch at 1 to 22 (MKKSTKLLAGIVTLASAMTLAA) is a signal peptide. C23 carries the N-palmitoyl cysteine lipid modification. Residue C23 is the site of S-diacylglycerol cysteine attachment. Positions 145–240 (TPEMTTQVTT…NKFYIVKVTK (96 aa)) constitute a PpiC domain. The tract at residues 301–333 (DKKASKANTSKSDQKSSSDSSKDSQSSKSKSEK) is disordered. Residues 312–322 (SDQKSSSDSSK) are compositionally biased toward basic and acidic residues. The segment covering 323-333 (DSQSSKSKSEK) has biased composition (low complexity).

The protein belongs to the PrsA family.

It is found in the cell membrane. It carries out the reaction [protein]-peptidylproline (omega=180) = [protein]-peptidylproline (omega=0). In terms of biological role, plays a major role in protein secretion by helping the post-translocational extracellular folding of several secreted proteins. The protein is Foldase protein PrsA of Streptococcus equi subsp. equi (strain 4047).